A 343-amino-acid chain; its full sequence is Cytoplasmic tRNA 2-thiolation protein 1 (343 aa).

It belongs to the TtcA family. CTU1/NCS6/ATPBD3 subfamily.

Its subcellular location is the cytoplasm. It functions in the pathway tRNA modification; 5-methoxycarbonylmethyl-2-thiouridine-tRNA biosynthesis. Its function is as follows. Plays a central role in 2-thiolation of mcm(5)S(2)U at tRNA wobble positions of tRNA(Lys), tRNA(Glu) and tRNA(Gln). Directly binds tRNAs and probably acts by catalyzing adenylation of tRNAs, an intermediate required for 2-thiolation. It is unclear whether it acts as a sulfurtransferase that transfers sulfur from thiocarboxylated URM1 onto the uridine of tRNAs at wobble position. In Drosophila sechellia (Fruit fly), this protein is Cytoplasmic tRNA 2-thiolation protein 1.